Here is a 165-residue protein sequence, read N- to C-terminus: Probable cell wall protein PGA15 (165 aa).

The N-terminal stretch at 1 to 16 (MKFIIILFTLISIVTA) is a signal peptide. The GPI-anchor amidated serine moiety is linked to residue serine 143. Residues 144-165 (GAANYLTSFSIGTFFVFVLGLI) constitute a propeptide, removed in mature form.

It belongs to the IHD1 family. The GPI-anchor is attached to the protein in the endoplasmic reticulum and serves to target the protein to the cell surface. There, the glucosamine-inositol phospholipid moiety is cleaved off and the GPI-modified mannoprotein is covalently attached via its lipidless GPI glycan remnant to the 1,6-beta-glucan of the outer cell wall layer.

Its subcellular location is the secreted. It is found in the cell wall. The protein resides in the membrane. Probable GPI-anchored cell wall protein that may be involved in cell wall organization, hyphal growth, as well as in virulence. This chain is Probable cell wall protein PGA15 (PGA15), found in Candida albicans (strain SC5314 / ATCC MYA-2876) (Yeast).